Reading from the N-terminus, the 163-residue chain is Acetolactate synthase isozyme 3 small subunit (163 aa).

Residues 4–78 (ILSVLLENES…DVLRVSELGQ (75 aa)) form the ACT domain.

This sequence belongs to the acetolactate synthase small subunit family. Dimer of large and small chains.

It carries out the reaction 2 pyruvate + H(+) = (2S)-2-acetolactate + CO2. Its pathway is amino-acid biosynthesis; L-isoleucine biosynthesis; L-isoleucine from 2-oxobutanoate: step 1/4. The protein operates within amino-acid biosynthesis; L-valine biosynthesis; L-valine from pyruvate: step 1/4. Its activity is regulated as follows. Sensitive to valine inhibition. The chain is Acetolactate synthase isozyme 3 small subunit (ilvH) from Salmonella typhimurium (strain LT2 / SGSC1412 / ATCC 700720).